The following is a 469-amino-acid chain: Neuraminidase (469 aa).

Residues 1–9 lie on the Intravirion side of the membrane; it reads MNPNQKIIT. The helical transmembrane segment at 10-30 threads the bilayer; sequence IGSVSLTIATICFLMQIAILV. Residues 11–33 form an involved in apical transport and lipid raft association region; it reads GSVSLTIATICFLMQIAILVTTV. The Virion surface portion of the chain corresponds to 31-469; that stretch reads TTVTLHFKQY…DGADINLMPI (439 aa). Positions 36 to 88 are hypervariable stalk region; that stretch reads HFKQYECSSPPNNQVIPCQPTIIERNITEIVYLTNTTIEKEICPKLVEYRNWS. Residues N61, N70, and N86 are each glycosylated (N-linked (GlcNAc...) asparagine; by host). Residues 91–469 form a head of neuraminidase region; that stretch reads QCKITGFAPF…DGADINLMPI (379 aa). Cystine bridges form between C92–C417, C124–C129, C183–C230, C232–C237, C278–C291, C280–C289, C318–C337, and C421–C447. Residue R118 participates in substrate binding. A glycan (N-linked (GlcNAc...) asparagine; by host) is linked at N146. D151 acts as the Proton donor/acceptor in catalysis. Residue R152 participates in substrate binding. Residues N200 and N234 are each glycosylated (N-linked (GlcNAc...) asparagine; by host). Position 276–277 (276–277) interacts with substrate; sequence EE. Residue R292 participates in substrate binding. D293, G297, and D324 together coordinate Ca(2+). The segment at 326-350 is disordered; that stretch reads PRKNDSSSSSYCQNPNNEKGSHGVK. An N-linked (GlcNAc...) asparagine; by host glycan is attached at N329. Residues 331–343 are compositionally biased toward polar residues; the sequence is SSSSSYCQNPNNE. R371 is a substrate binding site. An N-linked (GlcNAc...) asparagine; by host glycan is attached at N402. The active-site Nucleophile is the Y406.

This sequence belongs to the glycosyl hydrolase 34 family. As to quaternary structure, homotetramer. Ca(2+) is required as a cofactor. In terms of processing, N-glycosylated.

The protein resides in the virion membrane. It is found in the host apical cell membrane. It catalyses the reaction Hydrolysis of alpha-(2-&gt;3)-, alpha-(2-&gt;6)-, alpha-(2-&gt;8)- glycosidic linkages of terminal sialic acid residues in oligosaccharides, glycoproteins, glycolipids, colominic acid and synthetic substrates.. With respect to regulation, inhibited by the neuraminidase inhibitors zanamivir (Relenza) and oseltamivir (Tamiflu). These drugs interfere with the release of progeny virus from infected cells and are effective against all influenza strains. Resistance to neuraminidase inhibitors is quite rare. Functionally, catalyzes the removal of terminal sialic acid residues from viral and cellular glycoconjugates. Cleaves off the terminal sialic acids on the glycosylated HA during virus budding to facilitate virus release. Additionally helps virus spread through the circulation by further removing sialic acids from the cell surface. These cleavages prevent self-aggregation and ensure the efficient spread of the progeny virus from cell to cell. Otherwise, infection would be limited to one round of replication. Described as a receptor-destroying enzyme because it cleaves a terminal sialic acid from the cellular receptors. May facilitate viral invasion of the upper airways by cleaving the sialic acid moieties on the mucin of the airway epithelial cells. Likely to plays a role in the budding process through its association with lipid rafts during intracellular transport. May additionally display a raft-association independent effect on budding. Plays a role in the determination of host range restriction on replication and virulence. Sialidase activity in late endosome/lysosome traffic seems to enhance virus replication. This is Neuraminidase from Influenza A virus (strain A/Kitakyushu/159/1993 H3N2).